Here is a 437-residue protein sequence, read N- to C-terminus: Transcription factor AP-2-alpha (437 aa).

A Glycyl lysine isopeptide (Lys-Gly) (interchain with G-Cter in SUMO); alternate cross-link involves residue K10. K10 participates in a covalent cross-link: Glycyl lysine isopeptide (Lys-Gly) (interchain with G-Cter in SUMO2); alternate. The disordered stretch occupies residues 14-107; that stretch reads CEDRHDGTSN…GQRQSQESGL (94 aa). Residues 57 to 62 carry the PPxY motif motif; sequence YFPPPY. 2 stretches are compositionally biased toward low complexity: residues 65–74 and 88–101; these read IYPQSQDPYS and QPQP…GQRQ. Residues K177 and K184 each participate in a glycyl lysine isopeptide (Lys-Gly) (interchain with G-Cter in SUMO2) cross-link. S239 is modified (phosphoserine; by PKA). The tract at residues 280–410 is H-S-H (helix-span-helix), dimerization; that stretch reads RRKAANVTLL…YLTEALKAMD (131 aa). A compositionally biased stretch (polar residues) spans 414–427; that stretch reads LSNNPNSHTDNNAK. The disordered stretch occupies residues 414–437; it reads LSNNPNSHTDNNAKSSDKEEKHRK. The span at 428–437 shows a compositional bias: basic and acidic residues; it reads SSDKEEKHRK.

It belongs to the AP-2 family. As to quaternary structure, binds DNA as a dimer. Can form homodimers or heterodimers with other AP-2 family members. Interacts with WWOX. Interacts with CITED4. Interacts with UBE2I. Interacts with RALBP1 in a complex also containing EPN1 and NUMB during interphase and mitosis. Interacts with KCTD1; this interaction represses transcription activation. Interacts (via C-terminus) with CITED2 (via C-terminus); the interaction stimulates TFAP2A-transcriptional activation. Interacts (via N-terminus) with EP300 (via N-terminus); the interaction requires CITED2. Interacts with KCTD15; this interaction inhibits TFAP2A transcriptional activation. In terms of processing, sumoylated on Lys-10; which inhibits transcriptional activity.

The protein resides in the nucleus. Its function is as follows. Sequence-specific DNA-binding protein that interacts with inducible viral and cellular enhancer elements to regulate transcription of selected genes. AP-2 factors bind to the consensus sequence 5'-GCCNNNGGC-3' and activate genes involved in a large spectrum of important biological functions including proper eye, face, body wall, limb and neural tube development. They also suppress a number of genes including MCAM/MUC18, C/EBP alpha and MYC. AP-2-alpha is the only AP-2 protein required for early morphogenesis of the lens vesicle. Together with the CITED2 coactivator, stimulates the PITX2 P1 promoter transcription activation. Associates with chromatin to the PITX2 P1 promoter region. This is Transcription factor AP-2-alpha (TFAP2A) from Homo sapiens (Human).